The sequence spans 131 residues: Small ribosomal subunit protein uS8 (131 aa).

Belongs to the universal ribosomal protein uS8 family. Part of the 30S ribosomal subunit. Contacts proteins S5 and S12.

In terms of biological role, one of the primary rRNA binding proteins, it binds directly to 16S rRNA central domain where it helps coordinate assembly of the platform of the 30S subunit. This chain is Small ribosomal subunit protein uS8, found in Mesomycoplasma hyopneumoniae (strain 7448) (Mycoplasma hyopneumoniae).